A 734-amino-acid chain; its full sequence is 1,4-alpha-glucan branching enzyme GlgB (734 aa).

Catalysis depends on D414, which acts as the Nucleophile. The active-site Proton donor is the E467.

This sequence belongs to the glycosyl hydrolase 13 family. GlgB subfamily. Monomer.

The enzyme catalyses Transfers a segment of a (1-&gt;4)-alpha-D-glucan chain to a primary hydroxy group in a similar glucan chain.. The protein operates within glycan biosynthesis; glycogen biosynthesis. Its function is as follows. Catalyzes the formation of the alpha-1,6-glucosidic linkages in glycogen by scission of a 1,4-alpha-linked oligosaccharide from growing alpha-1,4-glucan chains and the subsequent attachment of the oligosaccharide to the alpha-1,6 position. The polypeptide is 1,4-alpha-glucan branching enzyme GlgB (Myxococcus xanthus (strain DK1622)).